A 711-amino-acid polypeptide reads, in one-letter code: 1,4-alpha-glucan branching enzyme GlgB (711 aa).

Residue aspartate 392 is the Nucleophile of the active site. Glutamate 443 serves as the catalytic Proton donor.

It belongs to the glycosyl hydrolase 13 family. GlgB subfamily. As to quaternary structure, monomer.

It catalyses the reaction Transfers a segment of a (1-&gt;4)-alpha-D-glucan chain to a primary hydroxy group in a similar glucan chain.. Its pathway is glycan biosynthesis; glycogen biosynthesis. Catalyzes the formation of the alpha-1,6-glucosidic linkages in glycogen by scission of a 1,4-alpha-linked oligosaccharide from growing alpha-1,4-glucan chains and the subsequent attachment of the oligosaccharide to the alpha-1,6 position. In Corynebacterium jeikeium (strain K411), this protein is 1,4-alpha-glucan branching enzyme GlgB.